The chain runs to 175 residues: Large ribosomal subunit protein eL14 (175 aa).

Positions 150 to 175 (KAAKMDSTEGAKRRMQKAIAARKAKK) are disordered. Residues 152–161 (AKMDSTEGAK) show a composition bias toward basic and acidic residues. Positions 162-175 (RRMQKAIAARKAKK) are enriched in basic residues.

It belongs to the eukaryotic ribosomal protein eL14 family.

Component of the large ribosomal subunit. The ribosome is a large ribonucleoprotein complex responsible for the synthesis of proteins in the cell. The polypeptide is Large ribosomal subunit protein eL14 (RPL14) (Leishmania donovani).